The sequence spans 709 residues: DCC-interacting protein 13-alpha (709 aa).

The required for RAB5A binding stretch occupies residues Met1–Ser428. The BAR domain occupies Gly3–Pro268. Residues Ser215–Asp259 are a coiled coil. The 99-residue stretch at Leu277 to Lys375 folds into the PH domain. Disordered stretches follow at residues Ala397–Glu434, Gly467–Ser491, and Val645–Ala709. Thr399 carries the post-translational modification Phosphothreonine. Position 401 is a phosphoserine (Ser401). The short motif at Ser403–Ala414 is the F&amp;H element. Position 410 is a phosphoserine; by PKA (Ser410). The PID domain occupies Ser496–Gln656. The stretch at Leu621–Ser673 forms a coiled coil. The segment covering Val645 to Ser667 has biased composition (basic and acidic residues). Over residues Ser674–Ser693 the composition is skewed to polar residues. Phosphoserine is present on residues Ser693 and Ser696. The span at Glu700–Ala709 shows a compositional bias: basic and acidic residues.

As to quaternary structure, homodimer. Binds RAB5A/Rab5 through an N-terminal domain. This interaction is essential for its recruitment to endosomal membranes as well as its role in cell proliferation. Binds DCC and the catalytic domain of the inactive form of AKT2 through its PID domain. Binds PIK3CA and subunits of the NuRD/MeCP1 complex. Interacts with OCRL and INPP5B. Interacts with NTRK2. Interacts with APPL2; interaction is independent of follicle stimulating hormone stimulation; interaction is decreased by adiponectin in a time-dependent manner. Forms a complex with APPL2 and RUVBL2. Forms a complex comprising APPL2, RUVBL2, CTNNB1, HDAC1 and HDAC2; interaction reduces interaction between CTNNB1, HDAC1, HDAC2 and RUVBL2 leading to the decrease of deacetylase activity of this complex; affects the recruitment of repressive complexes to the Wnt target genes. Interacts with ANXA2. Interacts with TGFBR1; interaction is TGF beta dependent; mediates trafficking of the TGFBR1 from the endosomes to the nucleus via microtubules in a TRAF6-dependent manner. Interacts with PRKCZ. Interacts with PIK3R1 and APPL2. Interacts with ADIPOR1; ADIPOQ enhances this interaction; inhibites adiponectin-stimulated binding of APPL2 to ADIPOR1. In terms of processing, phosphorylation at Ser-410 by PKA severely impairs binding to OCRL. In terms of tissue distribution, high levels in heart, ovary, pancreas and skeletal muscle.

Its subcellular location is the early endosome membrane. It is found in the nucleus. The protein resides in the cytoplasm. The protein localises to the endosome. It localises to the cell projection. Its subcellular location is the ruffle. It is found in the cytoplasmic vesicle. The protein resides in the phagosome. Its function is as follows. Multifunctional adapter protein that binds to various membrane receptors, nuclear factors and signaling proteins to regulate many processes, such as cell proliferation, immune response, endosomal trafficking and cell metabolism. Regulates signaling pathway leading to cell proliferation through interaction with RAB5A and subunits of the NuRD/MeCP1 complex. Functions as a positive regulator of innate immune response via activation of AKT1 signaling pathway by forming a complex with APPL1 and PIK3R1. Inhibits Fc-gamma receptor-mediated phagocytosis through PI3K/Akt signaling in macrophages. Regulates TLR4 signaling in activated macrophages. Involved in trafficking of the TGFBR1 from the endosomes to the nucleus via microtubules in a TRAF6-dependent manner. Plays a role in cell metabolism by regulating adiponecting and insulin signaling pathways. Required for fibroblast migration through HGF cell signaling. Positive regulator of beta-catenin/TCF-dependent transcription through direct interaction with RUVBL2/reptin resulting in the relief of RUVBL2-mediated repression of beta-catenin/TCF target genes by modulating the interactions within the beta-catenin-reptin-HDAC complex. This Homo sapiens (Human) protein is DCC-interacting protein 13-alpha.